A 322-amino-acid polypeptide reads, in one-letter code: MFLCVRILKRKYHELSSFQKLLIFTITIFLLWVLGVVDKFRETSFGDFSWPLETRNLQLRSKFTKYPQCKFSGNGQKIIIIIIKSSAKNGPMRESVRKTWGVFRMIDGVEVMPIFIVGRVENMEIMRRIDVESEKYKDILAISDIDSYRNNTLKLFGAIDYAANPNQCSSPDFTFLVDDDYLVHIPNLVKFAKTKQKEELVYEGFVFDTSPFRLKIHKHSISLNEYPFSRYPPYVSAGAVFLTSETIARFRNSIRKLKMFPFDDVFTGILAKTVNVAATHNENFIFWCRRVSQKEWDDGVIAVHGYARKDLEYEYSQLNGFE.

Topologically, residues 1–16 are cytoplasmic; it reads MFLCVRILKRKYHELS. Residues 17–37 traverse the membrane as a helical; Signal-anchor for type II membrane protein segment; that stretch reads SFQKLLIFTITIFLLWVLGVV. Topologically, residues 38 to 322 are lumenal; it reads DKFRETSFGD…YEYSQLNGFE (285 aa). A glycan (N-linked (GlcNAc...) asparagine) is linked at Asn150.

This sequence belongs to the glycosyltransferase 31 family. As to expression, expressed in the gut.

It is found in the golgi apparatus membrane. It participates in protein modification; protein glycosylation. Functionally, transfers N-acetylgalactosamine onto mannose groups of carbohydrate substrates. Required for susceptibility to pore-forming crystal toxins in conjunction with bre-1, bre-2, bre-3, and bre-4. Involved in resistance to the nematotoxic C.cinerea galectin Cgl2. In Caenorhabditis elegans, this protein is Beta-1,3-galactosyltransferase bre-5.